Consider the following 339-residue polypeptide: Malate/(S)-sulfolactate dehydrogenase (339 aa).

This sequence belongs to the LDH2/MDH2 oxidoreductase family. Homodimer.

The protein resides in the cytoplasm. The enzyme catalyses (S)-malate + NAD(+) = oxaloacetate + NADH + H(+). It carries out the reaction (S)-malate + NADP(+) = oxaloacetate + NADPH + H(+). It catalyses the reaction (2S)-3-sulfolactate + NAD(+) = 3-sulfopyruvate + NADH + H(+). Acts on oxaloacetate, sulfopyruvate but not on pyruvate. Has a higher selectivity for the coenzyme NADH than for NADPH. In Methanothermus fervidus (strain ATCC 43054 / DSM 2088 / JCM 10308 / V24 S), this protein is Malate/(S)-sulfolactate dehydrogenase (mdh).